We begin with the raw amino-acid sequence, 113 residues long: MNILSGKLPFLLGAVFAGSVVLATSVQAETSKLIIESGDSAQSRQHASMEKEQWNDTRMLRQKVNKRTEKEWDKADAAFDNRDKCEQSSNINAYWEPNTLRCLDRRTGRVITP.

The N-terminal stretch at 1-28 (MNILSGKLPFLLGAVFAGSVVLATSVQA) is a signal peptide.

Belongs to the UPF0482 family.

This is UPF0482 protein YnfB from Escherichia fergusonii (strain ATCC 35469 / DSM 13698 / CCUG 18766 / IAM 14443 / JCM 21226 / LMG 7866 / NBRC 102419 / NCTC 12128 / CDC 0568-73).